Here is a 467-residue protein sequence, read N- to C-terminus: Cis-zeatin O-glucosyltransferase 1 (467 aa).

H21 serves as the catalytic Proton acceptor. The an anthocyanidin site is built by H21 and N91. D127 (charge relay) is an active-site residue. A343, Q345, H360, W363, N364, S365, E368, D384, and Q385 together coordinate UDP-alpha-D-glucose.

It belongs to the UDP-glycosyltransferase family. Highly expressed in root. Expressed at lower level in kernel and cob. Weakly expressed in leaves. Weakly or not expressed in stems.

The catalysed reaction is cis-zeatin + UDP-alpha-D-glucose = O-beta-D-glucosyl-cis-zeatin + UDP + H(+). Its function is as follows. Utilizes UDP-glucose as the sugar donor and catalyzes the formation of O-beta-D-glucosyl-cis-zeatin from cis-zeatin. May regulate active versus storage forms of cytokinins and could have an impact on seed growth. The polypeptide is Cis-zeatin O-glucosyltransferase 1 (CISZOG1) (Zea mays (Maize)).